Here is an 88-residue protein sequence, read N- to C-terminus: Small ribosomal subunit protein uS15 (88 aa).

The protein belongs to the universal ribosomal protein uS15 family. As to quaternary structure, part of the 30S ribosomal subunit. Forms a bridge to the 50S subunit in the 70S ribosome, contacting the 23S rRNA.

In terms of biological role, one of the primary rRNA binding proteins, it binds directly to 16S rRNA where it helps nucleate assembly of the platform of the 30S subunit by binding and bridging several RNA helices of the 16S rRNA. Forms an intersubunit bridge (bridge B4) with the 23S rRNA of the 50S subunit in the ribosome. The chain is Small ribosomal subunit protein uS15 from Acidovorax sp. (strain JS42).